We begin with the raw amino-acid sequence, 65 residues long: Precursor peptide TigB (65 aa).

TIGSVS motif repeat units lie at residues 16-21, 23-28, 33-38, 40-45, 47-52, and 54-59; these read TIGSVS. Methylcyclopropylglycine is present on residues Ile17, Ile24, Ile34, Ile41, Ile48, and Ile55.

Is subject to maturation by TigE, that catalyzes the formation of methylcyclopropylglycine (mCPG) residues from isoleucine residues residing in the repeating TIGSVS motifs.

Functionally, precursor peptide which undergoes post-translational modifications by tailoring enzymes, leading to the mature natural product. The sequence is that of Precursor peptide TigB from Paramaledivibacter caminithermalis (strain DSM 15212 / CIP 107654 / DViRD3) (Clostridium caminithermale).